The sequence spans 257 residues: MELLGGPRVGNTESQLCVADGDDLPTYCSANSEDLNITTITTLSPTSMSHPQQVRDDQWVEPSDQLQGTAVFDATGDKATMPSWDELVRQHADRVYRLAYRLSGNQHDAEDLTQETFIRVFRSVQNYQPGTFEGWLHRITTNLFLDMVRRRARIRMEALPEDYDRVPADEPNPEQIYHDARLGPDLQAALASLPPEFRAAVVLCDIEGLSYEEIGATLGVKLGTVRSRIHRGRQALRDYLAAHPEHGECAVHVNPVR.

A sigma-70 factor domain-2 region spans residues 87 to 153; that stretch reads LVRQHADRVY…FLDMVRRRAR (67 aa). Residues 111-114 carry the Polymerase core binding motif; sequence DLTQ. A sigma-70 factor domain-4 region spans residues 186 to 236; it reads LQAALASLPPEFRAAVVLCDIEGLSYEEIGATLGVKLGTVRSRIHRGRQAL. Positions 211 to 230 form a DNA-binding region, H-T-H motif; sequence YEEIGATLGVKLGTVRSRIH.

Belongs to the sigma-70 factor family. ECF subfamily. Interacts transiently with the RNA polymerase catalytic core formed by RpoA, RpoB, RpoC and RpoZ (2 alpha, 1 beta, 1 beta' and 1 omega subunit) to form the RNA polymerase holoenzyme that can initiate transcription. Interacts (via sigma-70 factor domain 4) with cognate anti-sigma-E factor RseA under reducing conditions, which stops the sigma factor from functioning.

Sigma factors are initiation factors that promote the attachment of RNA polymerase to specific initiation sites and are then released. Extracytoplasmic function (ECF) sigma factors are held in an inactive form by an anti-sigma factor until released. Responds to surface stress (H(2)O(2)). The chain is ECF RNA polymerase sigma factor SigE (sigE) from Mycobacterium tuberculosis (strain ATCC 35801 / TMC 107 / Erdman).